The primary structure comprises 376 residues: uncharacterized protein (376 aa).

A helical transmembrane segment spans residues 24-44; the sequence is YLSIISIISVFLLNSSIVYSC. Zn(2+) is bound at residue His-251.

The protein belongs to the peptidase M23B family. Zn(2+) is required as a cofactor.

The protein localises to the cell membrane. This is an uncharacterized protein from Buchnera aphidicola subsp. Baizongia pistaciae (strain Bp).